The chain runs to 339 residues: GDP-fucose transporter 1 (339 aa).

8 helical membrane passes run 9–29, 45–65, 82–102, 111–133, 136–156, 165–185, 209–229, and 237–257; these read SVRI…LVFL, LFVT…LSLL, LSVA…ITFN, VSFY…YVIL, STSY…LMGV, ISYS…LNAI, ACFL…VAHF, and FWLM…ITGL. Residues 319–339 are disordered; sequence AHTIQASKDDKALQEDGQTKV. Residues 325-339 are compositionally biased toward basic and acidic residues; that stretch reads SKDDKALQEDGQTKV.

This sequence belongs to the TPT transporter family. SLC35C subfamily.

It is found in the golgi apparatus membrane. It catalyses the reaction GMP(out) + GDP-beta-L-fucose(in) = GMP(in) + GDP-beta-L-fucose(out). Its function is as follows. Antiporter specific for GDP-l-fucose and depending on the concomitant reverse transport of GMP. Involved in GDP-fucose import from the cytoplasm into the Golgi lumen. This is GDP-fucose transporter 1 (slc35c1) from Nematostella vectensis (Starlet sea anemone).